Here is a 304-residue protein sequence, read N- to C-terminus: Large ribosomal subunit protein uL18 (304 aa).

Residues 285-304 are disordered; the sequence is LNALNSSAGADDDDEEEDDE. Residues 294–304 show a composition bias toward acidic residues; it reads ADDDDEEEDDE.

Belongs to the universal ribosomal protein uL18 family. Component of the large ribosomal subunit (LSU).

The protein resides in the cytoplasm. The protein localises to the nucleus. Component of the ribosome, a large ribonucleoprotein complex responsible for the synthesis of proteins in the cell. The small ribosomal subunit (SSU) binds messenger RNAs (mRNAs) and translates the encoded message by selecting cognate aminoacyl-transfer RNA (tRNA) molecules. The large subunit (LSU) contains the ribosomal catalytic site termed the peptidyl transferase center (PTC), which catalyzes the formation of peptide bonds, thereby polymerizing the amino acids delivered by tRNAs into a polypeptide chain. The nascent polypeptides leave the ribosome through a tunnel in the LSU and interact with protein factors that function in enzymatic processing, targeting, and the membrane insertion of nascent chains at the exit of the ribosomal tunnel. The protein is Large ribosomal subunit protein uL18 (RPL5A) of Oryza sativa subsp. indica (Rice).